A 297-amino-acid polypeptide reads, in one-letter code: Phosphoribosylaminoimidazole-succinocarboxamide synthase (297 aa).

This sequence belongs to the SAICAR synthetase family.

The catalysed reaction is 5-amino-1-(5-phospho-D-ribosyl)imidazole-4-carboxylate + L-aspartate + ATP = (2S)-2-[5-amino-1-(5-phospho-beta-D-ribosyl)imidazole-4-carboxamido]succinate + ADP + phosphate + 2 H(+). Its pathway is purine metabolism; IMP biosynthesis via de novo pathway; 5-amino-1-(5-phospho-D-ribosyl)imidazole-4-carboxamide from 5-amino-1-(5-phospho-D-ribosyl)imidazole-4-carboxylate: step 1/2. The sequence is that of Phosphoribosylaminoimidazole-succinocarboxamide synthase from Methylobacillus flagellatus (strain ATCC 51484 / DSM 6875 / VKM B-1610 / KT).